The sequence spans 138 residues: Large ribosomal subunit protein uL11c (138 aa).

Belongs to the universal ribosomal protein uL11 family. In terms of assembly, part of the ribosomal stalk of the 50S ribosomal subunit. Interacts with L10 and the large rRNA to form the base of the stalk. L10 forms an elongated spine to which L12 dimers bind in a sequential fashion forming a multimeric L10(L12)X complex.

The protein resides in the plastid. Its subcellular location is the chloroplast. Forms part of the ribosomal stalk which helps the ribosome interact with GTP-bound translation factors. This is Large ribosomal subunit protein uL11c from Cyanidioschyzon merolae (strain NIES-3377 / 10D) (Unicellular red alga).